Here is a 117-residue protein sequence, read N- to C-terminus: Immunoglobulin kappa variable 1-9 (117 aa).

Residues 1 to 22 (MDMRVPAQLLGLLLLWLPGARC) form the signal peptide. Residues 23-45 (DIQLTQSPSFLSASVGDRVTITC) form a framework-1 region. The 94-residue stretch at 24 to 117 (IQLTQSPSFL…YYCQQLNSYP (94 aa)) folds into the Ig-like domain. Cysteines 45 and 110 form a disulfide. The tract at residues 46 to 56 (RASQGISSYLA) is complementarity-determining-1. Positions 57–71 (WYQQKPGKAPKLLIY) are framework-2. The complementarity-determining-2 stretch occupies residues 72-78 (AASTLQS). A framework-3 region spans residues 79–110 (GVPSRFSGSGSGTEFTLTISSLQPEDFATYYC). The complementarity-determining-3 stretch occupies residues 111-117 (QQLNSYP).

As to quaternary structure, immunoglobulins are composed of two identical heavy chains and two identical light chains; disulfide-linked.

The protein localises to the secreted. It localises to the cell membrane. Functionally, v region of the variable domain of immunoglobulin light chains that participates in the antigen recognition. Immunoglobulins, also known as antibodies, are membrane-bound or secreted glycoproteins produced by B lymphocytes. In the recognition phase of humoral immunity, the membrane-bound immunoglobulins serve as receptors which, upon binding of a specific antigen, trigger the clonal expansion and differentiation of B lymphocytes into immunoglobulins-secreting plasma cells. Secreted immunoglobulins mediate the effector phase of humoral immunity, which results in the elimination of bound antigens. The antigen binding site is formed by the variable domain of one heavy chain, together with that of its associated light chain. Thus, each immunoglobulin has two antigen binding sites with remarkable affinity for a particular antigen. The variable domains are assembled by a process called V-(D)-J rearrangement and can then be subjected to somatic hypermutations which, after exposure to antigen and selection, allow affinity maturation for a particular antigen. This chain is Immunoglobulin kappa variable 1-9, found in Homo sapiens (Human).